A 227-amino-acid polypeptide reads, in one-letter code: Peroxisomal membrane protein 11B (227 aa).

At 1–85 (MSLDTVDKLV…RNPGATPMIR (85 aa)) the chain is on the cytoplasmic side. Residues 86–106 (FLAVLANSGEMVYFFFDHFLW) traverse the membrane as a helical segment. Residues 107-201 (LSRIGSIDAK…IALAEIHPNP (95 aa)) are Lumenal-facing. A helical transmembrane segment spans residues 202–222 (FCNHTITLGISGLVSAWAGWY). At 223–227 (RNWPS) the chain is on the cytoplasmic side.

This sequence belongs to the peroxin-11 family. In terms of assembly, homooligomer. Interacts with ARC5 and FIS1B on peroxisomes. In terms of tissue distribution, expressed in roots, leaves and developing siliques.

It is found in the peroxisome membrane. Its function is as follows. Involved in peroxisomal proliferation. Promotes peroxisomal duplication, aggregation or elongation without fission. The chain is Peroxisomal membrane protein 11B (PEX11B) from Arabidopsis thaliana (Mouse-ear cress).